A 148-amino-acid chain; its full sequence is uncharacterized protein (148 aa).

The HTH asnC-type domain maps to 4 to 65; the sequence is LDRVDMQLVK…IPDIDKLGYM (62 aa). The H-T-H motif DNA-binding region spans 23-42; that stretch reads YRELADILNTTRQRIARRID.

This is an uncharacterized protein from Pyrococcus horikoshii (strain ATCC 700860 / DSM 12428 / JCM 9974 / NBRC 100139 / OT-3).